Reading from the N-terminus, the 309-residue chain is Probable manganese-dependent inorganic pyrophosphatase (309 aa).

Mn(2+)-binding residues include His-9, Asp-13, Asp-15, Asp-75, His-97, and Asp-149.

It belongs to the PPase class C family. The cofactor is Mn(2+).

Its subcellular location is the cytoplasm. The catalysed reaction is diphosphate + H2O = 2 phosphate + H(+). This is Probable manganese-dependent inorganic pyrophosphatase from Bacillus anthracis (strain CDC 684 / NRRL 3495).